Consider the following 220-residue polypeptide: MSDTLNLLAKKRDRAGKGASRAIRREGLVPAVIYGDKTPAMGITVDHIALFKMLNTGHFMNSVVTIDVDGQKLPTIPKDVQFHPVTDRVLHVDFLRVSANSLVEVAIPVSYVDEEKSPGIKLGGVLNIIHHELKLKVKATAIPEEIVVSVAGLEVGDSIHLNQIKLPEGAELAHDEHESTAATVIAPSGMKSNADDEADAALAAAASAASAEKKEAEKSE.

Belongs to the bacterial ribosomal protein bL25 family. CTC subfamily. In terms of assembly, part of the 50S ribosomal subunit; part of the 5S rRNA/L5/L18/L25 subcomplex. Contacts the 5S rRNA. Binds to the 5S rRNA independently of L5 and L18.

This is one of the proteins that binds to the 5S RNA in the ribosome where it forms part of the central protuberance. The protein is Large ribosomal subunit protein bL25 of Zymomonas mobilis subsp. mobilis (strain ATCC 31821 / ZM4 / CP4).